The chain runs to 266 residues: F-box only protein 50 (266 aa).

Residues 1 to 16 (MEKTQDRDTLSGRMEA) are compositionally biased toward basic and acidic residues. A disordered region spans residues 1–53 (MEKTQDRDTLSGRMEAEGSLNSEELPPHPQSPPPPPSPRSPTSPVTPELPQPN). Residues 27-41 (PHPQSPPPPPSPRSP) are compositionally biased toward pro residues. Phosphoserine occurs at positions 31, 37, 40, and 43. At Thr-46 the chain carries Phosphothreonine. The 179-residue stretch at 86–264 (LFLERPLYRN…VTDSSVSVQL (179 aa)) folds into the FBA domain.

In terms of tissue distribution, strongly expressed in kidney. Weakly expressed in stomach, colon, duodenum and prostate.

The protein localises to the cytoplasm. In terms of biological role, promotes cell proliferation. This Mus musculus (Mouse) protein is F-box only protein 50 (Nccrp1).